We begin with the raw amino-acid sequence, 380 residues long: RNA-binding motif protein, Y chromosome, family 9 (380 aa).

Residues 8-86 (GKIFIGGLNI…KRIKVKQARR (79 aa)) enclose the RRM domain. Disordered regions lie at residues 82–226 (KQAR…STSR) and 279–358 (HEAP…YSAS). Polar residues predominate over residues 166–178 (RSATSAQTRSNTG). 2 stretches are compositionally biased toward basic and acidic residues: residues 180–190 (RGREPHRREIS) and 333–351 (IDREYFDREGRQERGHSPK).

As to expression, testis-specific.

Its subcellular location is the nucleus. In terms of biological role, RNA-binding protein which may be involved in spermatogenesis. May be required for sperm development, possibly by participating in pre-mRNA splicing in the testis. In Mus musculus (Mouse), this protein is RNA-binding motif protein, Y chromosome, family 9.